Reading from the N-terminus, the 164-residue chain is Ecotin (164 aa).

An N-terminal signal peptide occupies residues Met-1–Ala-20. Cys-72 and Cys-109 are oxidised to a cystine.

Belongs to the protease inhibitor I11 (ecotin) family. In terms of assembly, homodimer.

The protein localises to the periplasm. In terms of biological role, general inhibitor of pancreatic serine proteases: inhibits chymotrypsin, trypsin, elastases, factor X, kallikrein as well as a variety of other proteases. This chain is Ecotin, found in Salmonella paratyphi A (strain ATCC 9150 / SARB42).